Reading from the N-terminus, the 343-residue chain is Homeobox-leucine zipper protein HOX16 (343 aa).

The segment at residues 74-133 is a DNA-binding region (homeobox); it reads LPEKKRRLTPEQVHLLERSFEEENKLEPERKTELARKLGLQPRQVAVWFQNRRARWKTKQ. Positions 132 to 176 are leucine-zipper; sequence KQLERDFDRLKASFDALRADHDALLQDNHRLHSQVMSLTEKLQEK. The disordered stretch occupies residues 218–239; sequence FEEQQEQQVKAEDRLSTGSGGS.

This sequence belongs to the HD-ZIP homeobox family. Class I subfamily. In terms of tissue distribution, expressed in seedlings, stems, leaf sheaths and blades and panicles.

Its subcellular location is the nucleus. Its function is as follows. Probable transcription factor. This Oryza sativa subsp. japonica (Rice) protein is Homeobox-leucine zipper protein HOX16 (HOX16).